Reading from the N-terminus, the 335-residue chain is NADH-quinone oxidoreductase subunit H (335 aa).

The next 8 helical transmembrane spans lie at 11-31, 81-101, 114-134, 154-174, 187-207, 238-258, 270-290, and 307-327; these read VILTVIKAIVILLAVVVAGAL, VIFTLAPVVAMSALLIAFAII, IGLLFFFAMAGLSVYAVLFAG, VSYEVFMGLALMGIVVQVGSF, LWFIIPQFFGFCTFFIAGVAV, FFVGEYIGIILISALLVTLFF, QLSFVWFALKTAFFILLFILL, and WKFCLPLTLINLLVTAAIVLW.

Belongs to the complex I subunit 1 family. NDH-1 is composed of 13 different subunits. Subunits NuoA, H, J, K, L, M, N constitute the membrane sector of the complex.

The protein resides in the cell inner membrane. It catalyses the reaction a quinone + NADH + 5 H(+)(in) = a quinol + NAD(+) + 4 H(+)(out). NDH-1 shuttles electrons from NADH, via FMN and iron-sulfur (Fe-S) centers, to quinones in the respiratory chain. The immediate electron acceptor for the enzyme in this species is believed to be ubiquinone. Couples the redox reaction to proton translocation (for every two electrons transferred, four hydrogen ions are translocated across the cytoplasmic membrane), and thus conserves the redox energy in a proton gradient. This subunit may bind ubiquinone. This chain is NADH-quinone oxidoreductase subunit H, found in Pseudomonas fluorescens (strain Pf0-1).